The sequence spans 230 residues: MGQKIHPLGFRIGITQKHRSSWFASSKDYSVLLQEDHKIRSFIHGKLSNASIAKIEINRKADQVEVLIATARPGIVLGKSGAGIESLRNSLTLILDPNKQIRVNVVEISDPDSEATLVAEFITQQLEKRVAFRRAVRQAVQRAQRANTQGVKIQVSGRLNGAEIARSEWVREGRVPLQTLRADIDYCHRQAHTTYGVLGVKVWLFKGELLPDSKVVELAPSQDQINPDVS.

A KH type-2 domain is found at 39-109 (IRSFIHGKLS…QIRVNVVEIS (71 aa)).

Belongs to the universal ribosomal protein uS3 family. In terms of assembly, part of the 30S ribosomal subunit.

The protein localises to the plastid. It is found in the chloroplast. This chain is Small ribosomal subunit protein uS3c (rps3), found in Porphyra purpurea (Red seaweed).